The following is a 381-amino-acid chain: Alkanesulfonate monooxygenase (381 aa).

It belongs to the SsuD family. Homotetramer.

It carries out the reaction an alkanesulfonate + FMNH2 + O2 = an aldehyde + FMN + sulfite + H2O + 2 H(+). In terms of biological role, catalyzes the desulfonation of aliphatic sulfonates. The chain is Alkanesulfonate monooxygenase from Escherichia coli O81 (strain ED1a).